We begin with the raw amino-acid sequence, 381 residues long: Fe-S cluster assembly protein DRE2 (381 aa).

Positions 8–165 (AQGSGRFLLL…KPDFGAQQAV (158 aa)) are N-terminal SAM-like domain. The tract at residues 100–134 (RNRDNQIWGSGSDSAAGLGSSDGDGGGGEKMSSSE) is disordered. The segment covering 108–118 (GSGSDSAAGLG) has biased composition (low complexity). Residues 119–128 (SSDGDGGGGE) are compositionally biased toward gly residues. Positions 166–273 (PLKLGRKKNL…EEELLGEYDM (108 aa)) are linker. [2Fe-2S] cluster is bound by residues C283, C294, C297, and C299. Residues 283–299 (CRPKAGKRRRACKDCTC) are fe-S binding site A. C344, C347, C355, and C358 together coordinate [4Fe-4S] cluster. 2 short sequence motifs (cx2C motif) span residues 344–347 (CGNC) and 355–358 (CDGC). Residues 344–358 (CGNCALGDAFRCDGC) form a fe-S binding site B region.

This sequence belongs to the anamorsin family. As to quaternary structure, monomer. Interacts with TAH18. Interacts with MIA40. [2Fe-2S] cluster is required as a cofactor. It depends on [4Fe-4S] cluster as a cofactor.

The protein localises to the cytoplasm. The protein resides in the mitochondrion intermembrane space. In terms of biological role, component of the cytosolic iron-sulfur (Fe-S) protein assembly (CIA) machinery required for the maturation of extramitochondrial Fe-S proteins. Part of an electron transfer chain functioning in an early step of cytosolic Fe-S biogenesis, facilitating the de novo assembly of a [4Fe-4S] cluster on the scaffold complex CFD1-NBP35. Electrons are transferred to DRE2 from NADPH via the FAD- and FMN-containing protein TAH18. TAH18-DRE2 are also required for the assembly of the diferric tyrosyl radical cofactor of ribonucleotide reductase (RNR), probably by providing electrons for reduction during radical cofactor maturation in the catalytic small subunit RNR2. This Paracoccidioides brasiliensis (strain Pb18) protein is Fe-S cluster assembly protein DRE2.